Here is a 412-residue protein sequence, read N- to C-terminus: UPF0761 membrane protein LPC_2650 (412 aa).

Helical transmembrane passes span 36–56 (ALAF…LAIF), 99–119 (LSIW…FTIE), 137–157 (AFLL…LSLA), 177–197 (ILHY…YVVV), 210–230 (GGLV…YYLI), and 241–261 (AFAT…ITLL).

This sequence belongs to the UPF0761 family.

Its subcellular location is the cell inner membrane. The protein is UPF0761 membrane protein LPC_2650 of Legionella pneumophila (strain Corby).